The sequence spans 666 residues: Endogenous retrovirus group K member 9 Gag polyprotein (666 aa).

G2 carries N-myristoyl glycine lipidation. Residues 165–264 form a disordered region; it reads GKGPELVGPS…APPSRQGSEL (100 aa). Positions 232-247 are enriched in pro residues; sequence GMPPAPQGRAPYPQPP. 2 consecutive CCHC-type zinc fingers follow at residues 544–561 and 580–597; these read GKCYNCGQIGHLKKNCPV and DLCPRCKKGKHWASQCRS. The segment at 598–641 is disordered; that stretch reads KFDKNGQPLSGNEQRGQPQAPQQTGAFPIQPFVPQGFQGQQPPL. Residues 604 to 622 are compositionally biased toward polar residues; it reads QPLSGNEQRGQPQAPQQTG. Residues 624 to 640 show a composition bias toward low complexity; the sequence is FPIQPFVPQGFQGQQPP.

It belongs to the beta type-B retroviral Gag protein family. HERV class-II K(HML-2) gag subfamily. Post-translationally, myristoylation is essential for retroviral assembly. Alteration of the glycine residue leads to a block in the budding of particles and an accumulation of Gag inside the cell. Specific enzymatic cleavages may yield mature proteins.

It is found in the cell membrane. In terms of biological role, the products of the Gag polyproteins of infectious retroviruses perform highly complex orchestrated tasks during the assembly, budding, maturation, and infection stages of the viral replication cycle. During viral assembly, the proteins form membrane associations and self-associations that ultimately result in budding of an immature virion from the infected cell. Gag precursors also function during viral assembly to selectively bind and package two plus strands of genomic RNA. Endogenous Gag proteins may have kept, lost or modified their original function during evolution. The chain is Endogenous retrovirus group K member 9 Gag polyprotein (ERVK-9) from Homo sapiens (Human).